The primary structure comprises 213 residues: Orotate phosphoribosyltransferase (213 aa).

Lys26 lines the 5-phospho-alpha-D-ribose 1-diphosphate pocket. Position 34 to 35 (34 to 35 (FF)) interacts with orotate. Residues 72–73 (YK), Arg99, Lys100, Lys103, His105, and 124–132 (DDVITAGTA) each bind 5-phospho-alpha-D-ribose 1-diphosphate. Residues Thr128 and Arg156 each coordinate orotate.

This sequence belongs to the purine/pyrimidine phosphoribosyltransferase family. PyrE subfamily. As to quaternary structure, homodimer. Mg(2+) serves as cofactor.

The enzyme catalyses orotidine 5'-phosphate + diphosphate = orotate + 5-phospho-alpha-D-ribose 1-diphosphate. It functions in the pathway pyrimidine metabolism; UMP biosynthesis via de novo pathway; UMP from orotate: step 1/2. Its function is as follows. Catalyzes the transfer of a ribosyl phosphate group from 5-phosphoribose 1-diphosphate to orotate, leading to the formation of orotidine monophosphate (OMP). This chain is Orotate phosphoribosyltransferase, found in Salmonella arizonae (strain ATCC BAA-731 / CDC346-86 / RSK2980).